A 431-amino-acid polypeptide reads, in one-letter code: SH2 domain-containing protein 4B (431 aa).

Residues 201 to 235 (QASENEEREWEEQLRRSKAADEERSRRAQRARDEY) form a disordered region. The segment covering 211–235 (EEQLRRSKAADEERSRRAQRARDEY) has biased composition (basic and acidic residues). The region spanning 325–417 (WFHGIISRES…SGGELLQEPC (93 aa)) is the SH2 domain.

The sequence is that of SH2 domain-containing protein 4B (Sh2d4b) from Mus musculus (Mouse).